We begin with the raw amino-acid sequence, 352 residues long: C-C chemokine receptor type 5 (352 aa).

Topologically, residues 1-30 (MDYQVSSPTYDIDYYTSEPCQKINVKQIAA) are extracellular. A Sulfotyrosine modification is found at tyrosine 3. 2 O-linked (GalNAc...) serine glycosylation sites follow: serine 6 and serine 7. Sulfotyrosine is present on residues tyrosine 10, tyrosine 14, and tyrosine 15. 2 disulfide bridges follow: cysteine 20–cysteine 269 and cysteine 101–cysteine 178. Residues 31–58 (RLLPPLYSLVFIFGFVGNILVVLILINC) traverse the membrane as a helical segment. The Cytoplasmic portion of the chain corresponds to 59–68 (KRLKSMTDIY). Residues 69–89 (LLNLAISDLLFLLTVPFWAHY) traverse the membrane as a helical segment. The Extracellular portion of the chain corresponds to 90-102 (AAAQWDFGNTMCQ). The chain crosses the membrane as a helical span at residues 103 to 124 (LLTGLYFIGFFSGIFFIILLTI). Over 125-141 (DRYLAIVHAVFALKART) the chain is Cytoplasmic. The helical transmembrane segment at 142 to 166 (VTFGVVTSVITWVVAVFASLPGIIF) threads the bilayer. At 167–198 (TRSQREGLHYTCSSHFPYSQYQFWKNFQTLKI) the chain is on the extracellular side. The chain crosses the membrane as a helical span at residues 199-218 (VILGLVLPLLVMVICYSGIL). Residues 219–235 (KTLLRCRNEKKRHRAVR) lie on the Cytoplasmic side of the membrane. Residues 236 to 260 (LIFTIMIVYFLFWAPYNIVLLLNTF) traverse the membrane as a helical segment. At 261–277 (QEFFGLNNCSSSNRLDQ) the chain is on the extracellular side. The helical transmembrane segment at 278-301 (AMQVTETLGMTHCCINPIIYAFVG) threads the bilayer. At 302-352 (EKFRNYLLVFFQKHIAKRFCKCCSIFQQEAPERASSVYTRSTGEQEISVGL) the chain is on the cytoplasmic side. S-palmitoyl cysteine attachment occurs at residues cysteine 321, cysteine 323, and cysteine 324. Phosphoserine; by BARK1 is present on residues serine 336, serine 337, serine 342, and serine 349.

The protein belongs to the G-protein coupled receptor 1 family. As to quaternary structure, interacts with PRAF2. Efficient ligand binding to CCL3/MIP-1alpha and CCL4/MIP-1beta requires sulfation, O-glycosylation and sialic acid modifications. Glycosylation on Ser-6 is required for efficient binding of CCL4. Interacts with GRK2. Interacts with ARRB1 and ARRB2. Interacts with CNIH4. Interacts with S100A4; this interaction stimulates T-lymphocyte chemotaxis. Sulfated on at least 2 of the N-terminal tyrosines. Sulfation is required for efficient binding of the chemokines, CCL3 and CCL4. Post-translationally, palmitoylation in the C-terminal is important for cell surface expression. In terms of processing, phosphorylation on serine residues in the C-terminal is stimulated by binding CC chemokines especially by APO-RANTES. O-glycosylated, but not N-glycosylated. Ser-6 appears to be the major site even if Ser-7 may be also O-glycosylated. Also sialylated glycans present which contribute to chemokine binding. Thr-16 and Ser-17 may also be glycosylated and, if so, with small moieties such as a T-antigen.

Its subcellular location is the cell membrane. Functionally, receptor for a number of inflammatory CC-chemokines including CCL3/MIP-1-alpha, CCL4/MIP-1-beta and RANTES and subsequently transduces a signal by increasing the intracellular calcium ion level. May play a role in the control of granulocytic lineage proliferation or differentiation. Participates in T-lymphocyte migration to the infection site by acting as a chemotactic receptor. The protein is C-C chemokine receptor type 5 (CCR5) of Papio anubis (Olive baboon).